The sequence spans 490 residues: Serine/threonine-protein kinase PBL35 (490 aa).

Disordered stretches follow at residues Met-1–Glu-39 and Ser-80–Glu-103. Residues Ser-14–Glu-39 adopt a coiled-coil conformation. The span at Lys-23–Asn-33 shows a compositional bias: basic residues. Residues Ser-94–Glu-103 are compositionally biased toward low complexity. One can recognise a Protein kinase domain in the interval Phe-136–Leu-422. ATP-binding positions include Leu-142–Val-150 and Lys-174. Tyr-219 carries the phosphotyrosine modification. The active-site Proton acceptor is the Asp-269. Phosphoserine is present on residues Ser-273 and Ser-303. Thr-304 and Thr-309 each carry phosphothreonine. The residue at position 317 (Tyr-317) is a Phosphotyrosine. The interval Ala-442–Thr-490 is disordered. The segment covering Ser-444–Ser-454 has biased composition (gly residues). Residues Thr-463 to Ser-473 show a composition bias toward polar residues.

It belongs to the protein kinase superfamily. Ser/Thr protein kinase family. In terms of assembly, interacts with SD129. Post-translationally, phosphorylated by SD129 in response to the pathogen-associated molecular pattern (PAMP) 3-OH-C10:0, a medium-chain 3-hydroxy fatty acid.

The protein resides in the cell membrane. It carries out the reaction L-seryl-[protein] + ATP = O-phospho-L-seryl-[protein] + ADP + H(+). The enzyme catalyses L-threonyl-[protein] + ATP = O-phospho-L-threonyl-[protein] + ADP + H(+). Functionally, involved in chitin-triggered immune signaling and is required for reactive oxygen species (ROS) production. Acts downstream of SD129 in defense signaling triggered by the pathogen-associated molecular pattern (PAMP) 3-OH-C10:0, a medium-chain 3-hydroxy fatty acid. The chain is Serine/threonine-protein kinase PBL35 from Arabidopsis thaliana (Mouse-ear cress).